Reading from the N-terminus, the 329-residue chain is DNA-directed RNA polymerase subunit alpha (329 aa).

Positions 1-234 (MQSAVNEFLT…QQLAVFVDLE (234 aa)) are alpha N-terminal domain (alpha-NTD). The interval 248–329 (IDPVLLRPVD…WPPASLKNND (82 aa)) is alpha C-terminal domain (alpha-CTD).

The protein belongs to the RNA polymerase alpha chain family. Homodimer. The RNAP catalytic core consists of 2 alpha, 1 beta, 1 beta' and 1 omega subunit. When a sigma factor is associated with the core the holoenzyme is formed, which can initiate transcription.

It catalyses the reaction RNA(n) + a ribonucleoside 5'-triphosphate = RNA(n+1) + diphosphate. In terms of biological role, DNA-dependent RNA polymerase catalyzes the transcription of DNA into RNA using the four ribonucleoside triphosphates as substrates. The protein is DNA-directed RNA polymerase subunit alpha of Saccharophagus degradans (strain 2-40 / ATCC 43961 / DSM 17024).